The primary structure comprises 395 residues: Chaperone protein DnaJ (395 aa).

The region spanning 4–69 is the J domain; sequence DYYEVLGLSR…DKRRRYDQFG (66 aa). The CR-type zinc-finger motif lies at 151–232; sequence GVEKTLKIKK…CYGEGIKQGE (82 aa). Zn(2+) is bound by residues Cys-164, Cys-167, Cys-180, Cys-183, Cys-206, Cys-209, Cys-220, and Cys-223. CXXCXGXG motif repeat units lie at residues 164–171, 180–187, 206–213, and 220–227; these read CTECNGTG, CPTCHGSG, CPTCGGEG, and CVSCYGEG.

This sequence belongs to the DnaJ family. As to quaternary structure, homodimer. It depends on Zn(2+) as a cofactor.

The protein localises to the cytoplasm. Participates actively in the response to hyperosmotic and heat shock by preventing the aggregation of stress-denatured proteins and by disaggregating proteins, also in an autonomous, DnaK-independent fashion. Unfolded proteins bind initially to DnaJ; upon interaction with the DnaJ-bound protein, DnaK hydrolyzes its bound ATP, resulting in the formation of a stable complex. GrpE releases ADP from DnaK; ATP binding to DnaK triggers the release of the substrate protein, thus completing the reaction cycle. Several rounds of ATP-dependent interactions between DnaJ, DnaK and GrpE are required for fully efficient folding. Also involved, together with DnaK and GrpE, in the DNA replication of plasmids through activation of initiation proteins. This chain is Chaperone protein DnaJ, found in Chlorobium phaeobacteroides (strain DSM 266 / SMG 266 / 2430).